Here is a 506-residue protein sequence, read N- to C-terminus: ATP synthase subunit alpha, chloroplastic (506 aa).

170–177 provides a ligand contact to ATP; the sequence is GDRQTGKT.

It belongs to the ATPase alpha/beta chains family. As to quaternary structure, F-type ATPases have 2 components, CF(1) - the catalytic core - and CF(0) - the membrane proton channel. CF(1) has five subunits: alpha(3), beta(3), gamma(1), delta(1), epsilon(1). CF(0) has four main subunits: a, b, b' and c.

The protein resides in the plastid. It is found in the chloroplast thylakoid membrane. The enzyme catalyses ATP + H2O + 4 H(+)(in) = ADP + phosphate + 5 H(+)(out). In terms of biological role, produces ATP from ADP in the presence of a proton gradient across the membrane. The alpha chain is a regulatory subunit. This Chlorella vulgaris (Green alga) protein is ATP synthase subunit alpha, chloroplastic.